We begin with the raw amino-acid sequence, 1501 residues long: MATQMVNQATGNSLFCTSTYSSISLDNDMYGLHDLSKADMAAPRLIMLANVALTGELNSGGCDYTLEGERQMAELTTVNDNSFSDSEGDRLEDSPTMDIQSRNFTMDIEPAECSKEGTSENDGTLLSNTLEEEVQKDKKAQAPSTTDDKIKCVKSKPFRCKPCQYKAESEEEFVHHIKIHSAKIYVDNDSKKNPQGKEADSSIPEESDISKGPIQCDGCGYNTNRFDHYLAHLKHHNKAGENERVYKCTICTYSTVSEYHWKKHLRNHYPRILYTCSQCSYFSDRKNNYIQHIRTHTGERPYQCIICLYSSSQKTHLTRHMRTHSGEKPFKCEQCSYVASNQHEVTRHARQVHNGPKPLTCPHCDYKTADRSNFKKHVELHVNPRQFLCPVCDYAASKKCNLQYHIKSRHSGCTNITMNVSKVKLRTKKGEVGDEDADTNKPMENGNIINRSVGKKLEETVKAEKRESCVKAKKRIVGMVDGQVAKKSRLSSTQKKIKASEVRPEKIVDKSRKSSFVKRKTDVLENPNDTQTSTLKKKKLKNARIVNTSEIKYDITKKLTGSVNKKENSFVKNMHKKKTGAQSSNGKKNMPNKITEKKEKGKQLDSKTSVASDITEEQTIVGKVANENYSEQVAASEVASSNVNSDSSESCCLLNDVMQTDLSINTTLETEVSTDHDTKSEHVSKAVMALVMQRDTQMDLSMLVDLKANFSKQEKTQDNLLMDIETISSDLLLQREEPNQVLYQNGIPNKLLREKCGAIADLPVDGAKTTVNLQIGKANFCFQNDCCQPDNLLVDGCKPMELREPSADLLMDHGHPSSDHLVGRGRPPYDHLINCGKSSRDPCVLTWDGEEPTCNKLVEVDEPTSNKLVYSNKSICIQLVGGAEPTKVQPARDEPTSVQPAAAGDEPTRVQPVVPGDEPTSVQPVVPGDEPTSVQLVVTRDKPTSIQTVTVRDEPSIIKTVVAGDEPYIVQTVGDEPSIAQTVEDEQSIVQTVAAKDEPSIAXTAAEDEPSIVQTVXAMDEPAIVQTVAAGDEPTSVQTVAAGDEPTSVQPLSREDPKSVQPIGEDQPTSVQPPGGDEQTNLLINSKTAYLPVCTKEAIGLSVARQDETELLVRRENRSVLSTVWDEPTDLSFERNVQSMNIPIDLSTTNQNPICMSKGMGCPLHLPVEWSEPFNLSMDMDWHKPANLSLVEPSDLSVRKGDSADLSLNNKKPADLSVVWGEPVDLSLGRSEPADLSVGMNQPAELKMGIPDTIGLLVEGRQLSVLTMGRGVESFDLLMGRVDHIDLSVERCEPIDLSVEKGIPRNLEISEGKHFGKLDNCYNLNCAAFQIKDQAKCNIIPENTSQSNTKLSVEIAEPHNHLQSMCVPSELHGNLDTTVQQSKHNECNNGTKEVGTSQLPCAVSRCVSXDEDEGIHSHDGSDISDNVSEMSYDSGLNGVPSVQKTLSSEPKVVINSSETKESFVCIFCDRTFRKEEEYTKHLRRHLVNVYYLKKAAKDIDN.

The C2H2-type 1 zinc finger occupies 158–180; the sequence is FRCKPCQYKAESEEEFVHHIKIH. Basic and acidic residues predominate over residues 186 to 200; the sequence is VDNDSKKNPQGKEAD. A disordered region spans residues 186–209; sequence VDNDSKKNPQGKEADSSIPEESDI. 7 consecutive C2H2-type zinc fingers follow at residues 214 to 236, 246 to 268, 274 to 296, 302 to 324, 330 to 353, 359 to 381, and 387 to 410; these read IQCD…LKHH, YKCT…LRNH, YTCS…IRTH, YQCI…MRTH, FKCE…RQVH, LTCP…VELH, and FLCP…KSRH. 4 disordered regions span residues 491 to 514, 569 to 612, 885 to 929, and 1040 to 1079; these read SSTQ…SRKS, SFVK…SVAS, PTKV…VPGD, and VAAG…GDEQ. Composition is skewed to basic and acidic residues over residues 498-512 and 594-605; these read KASE…DKSR and ITEKKEKGKQLD. Residues 1067 to 1079 show a composition bias toward polar residues; it reads QPTSVQPPGGDEQ. The C2H2-type 9 zinc-finger motif lies at 1463–1485; it reads FVCIFCDRTFRKEEEYTKHLRRH.

The protein resides in the nucleus. The protein localises to the cytoplasm. Functionally, transcriptional repressor which binds neuron-restrictive silencer element (NRSE) and represses neuronal gene transcription in non-neuronal cells. Plays a role in the early development of the nervous system and is required for proper patterning of the neuroectoderm during gastrulation. This involves the correct speciation of the neuroepithelial domain and adequate development of the non-neural ectoderm. The polypeptide is RE1-silencing transcription factor A (rest-a) (Xenopus laevis (African clawed frog)).